The chain runs to 130 residues: Small ribosomal subunit protein uS11 (130 aa).

Belongs to the universal ribosomal protein uS11 family. In terms of assembly, part of the 30S ribosomal subunit. Interacts with proteins S7 and S18. Binds to IF-3.

In terms of biological role, located on the platform of the 30S subunit, it bridges several disparate RNA helices of the 16S rRNA. Forms part of the Shine-Dalgarno cleft in the 70S ribosome. In Rippkaea orientalis (strain PCC 8801 / RF-1) (Cyanothece sp. (strain PCC 8801)), this protein is Small ribosomal subunit protein uS11.